The chain runs to 502 residues: ATP synthase subunit alpha (502 aa).

ATP is bound at residue 169–176; the sequence is GDRQTGKT.

Belongs to the ATPase alpha/beta chains family. In terms of assembly, F-type ATPases have 2 components, CF(1) - the catalytic core - and CF(0) - the membrane proton channel. CF(1) has five subunits: alpha(3), beta(3), gamma(1), delta(1), epsilon(1). CF(0) has three main subunits: a(1), b(2) and c(9-12). The alpha and beta chains form an alternating ring which encloses part of the gamma chain. CF(1) is attached to CF(0) by a central stalk formed by the gamma and epsilon chains, while a peripheral stalk is formed by the delta and b chains.

The protein localises to the cell membrane. The catalysed reaction is ATP + H2O + 4 H(+)(in) = ADP + phosphate + 5 H(+)(out). In terms of biological role, produces ATP from ADP in the presence of a proton gradient across the membrane. The alpha chain is a regulatory subunit. This is ATP synthase subunit alpha from Bacillus pumilus (strain SAFR-032).